Consider the following 361-residue polypeptide: Hydroxycarboxylate dehydrogenase B (361 aa).

NAD(+) contacts are provided by residues H48, 122–124 (GRI), 178–182 (LLDYA), H234, N270, and 313–316 (GEWE).

Belongs to the LDH2/MDH2 oxidoreductase family.

It catalyses the reaction 2-hydroxyglutarate + NADP(+) = 2-oxoglutarate + NADPH + H(+). It carries out the reaction 2-hydroxyglutarate + NAD(+) = 2-oxoglutarate + NADH + H(+). The catalysed reaction is 3-phenyllactate + NADP(+) = 3-phenylpyruvate + NADPH + H(+). The enzyme catalyses 3-phenyllactate + NAD(+) = 3-phenylpyruvate + NADH + H(+). It catalyses the reaction (2R)-2-hydroxy-3-(4-hydroxyphenyl)propanoate + NAD(+) = 3-(4-hydroxyphenyl)pyruvate + NADH + H(+). It carries out the reaction (2R)-2-hydroxy-3-(4-hydroxyphenyl)propanoate + NADP(+) = 3-(4-hydroxyphenyl)pyruvate + NADPH + H(+). The catalysed reaction is (2R)-3-(3,4-dihydroxyphenyl)lactate + NADP(+) = 3-(3,4-dihydroxyphenyl)pyruvate + NADPH + H(+). The enzyme catalyses (2R)-3-(3,4-dihydroxyphenyl)lactate + NAD(+) = 3-(3,4-dihydroxyphenyl)pyruvate + NADH + H(+). Functionally, catalyzes the NAD(P)H-dependent reduction of 2-oxoglutarate, phenylpyruvate and (4-hydroxyphenyl)pyruvate, leading to the respective 2-hydroxycarboxylate in vitro. Shows a preference for NADPH over NADH as a redox partner. Do not catalyze the reverse reactions. This Escherichia coli O157:H7 protein is Hydroxycarboxylate dehydrogenase B.